Reading from the N-terminus, the 240-residue chain is MEQPKYKRVVLKLSGEALAGKQGFGIQPAVIQSIAKQVKEVVELGVEVAIVVGGGNIWRGKTGSEMGMDRATADYMGMLATVMNALALQDSLEQLGVETRVQTSIEMRQVAEPYIRRRAIRHLEKKRVVIFAAGTGNPYFSTDTTAALRAAEIEADVILMAKNNVDGVYSADPNVDANAVKYDELSYLDVIKQGLGVMDSTASSLCMDNNIPLIVFSIMEEGNIKRAVLGENIGTIVRGK.

Position 12 to 15 (12 to 15 (KLSG)) interacts with ATP. An involved in allosteric activation by GTP region spans residues 20-25 (GKQGFG). Gly54 provides a ligand contact to UMP. The ATP site is built by Gly55 and Arg59. Residues Asp74 and 135–142 (TGNPYFST) contribute to the UMP site. The ATP site is built by Asn163, Tyr169, and Asp172.

Belongs to the UMP kinase family. Homohexamer.

The protein localises to the cytoplasm. The catalysed reaction is UMP + ATP = UDP + ADP. It functions in the pathway pyrimidine metabolism; CTP biosynthesis via de novo pathway; UDP from UMP (UMPK route): step 1/1. With respect to regulation, allosterically activated by GTP. Inhibited by UTP. Functionally, catalyzes the reversible phosphorylation of UMP to UDP. This is Uridylate kinase from Geobacillus kaustophilus (strain HTA426).